Reading from the N-terminus, the 1907-residue chain is Probable RNA-directed RNA polymerase (1907 aa).

The segment at 42-61 is disordered; it reads NTHNDHEETHGESPEVPKAS. Residues 44–56 are compositionally biased toward basic and acidic residues; that stretch reads HNDHEETHGESPE.

The protein belongs to the totiviridae RNA-directed RNA polymerase family.

The enzyme catalyses RNA(n) + a ribonucleoside 5'-triphosphate = RNA(n+1) + diphosphate. Its function is as follows. RNA-dependent RNA polymerase which replicates the viral genome. Catalyzes the transcription of fully conservative plus-strand genomic RNAs that are extruded from the virion into the cytoplasm where they function as mRNAs for translation of viral proteins and also as substrates for encapsidation to form new virions. Once encapsidated, the positive strand is converted to dsRNA by the RNA-directed RNA polymerase. Displays ssRNA-binding activity. The polypeptide is Probable RNA-directed RNA polymerase (gag-pol) (Giardia intestinalis (Giardia lamblia)).